Reading from the N-terminus, the 136-residue chain is Polyadenylate-binding protein-interacting protein 2B (136 aa).

The span at asparagine 15–serine 25 shows a compositional bias: polar residues. 2 disordered regions span residues asparagine 15–lysine 40 and serine 107–tyrosine 136. The segment covering lysine 27–lysine 40 has biased composition (basic and acidic residues).

This sequence belongs to the PAIP2 family. In terms of assembly, interacts (via central acidic portion and C-terminus) with PABPC1 (via the second and third RRM domains and the C-terminus). In terms of processing, ubiquitinated in vitro. In terms of tissue distribution, expressed at very high levels in pancreas, at high levels in testis and at moderately high levels in brain, heart and lung (at protein level).

In terms of biological role, inhibits translation of capped and polyadenylated mRNAs by displacing PABPC1 from the poly(A) tail. In Mus musculus (Mouse), this protein is Polyadenylate-binding protein-interacting protein 2B (Paip2b).